Here is a 646-residue protein sequence, read N- to C-terminus: MKKLIELKGVSRTYGNGDQTRTVLKNVDLTIVAGEMVAIIGASGSGKSTLMNIMGCLDVPNRGDYYIDGQNAACLSPDELARVRREHIGFIFQRYHLIPDLSALGNVEIPAIYANSERDSRRQRATALLGRLGLEGREHHKPCELSGGQQQRVSIARALINGGKIILADEPTGALDSQSGQEVLAILNELNRRGHTVVMVTHDMKVARHAKRIIELCDGEIIADSGGCVSATETLPKTNRIRQSYWKTLLDRTRESMQMALKAMKTHRLRTTLTMIGIVFGIASVVTVVALGEGARQETLEEIKSLGTNVVSIYPGQDLFDDSIESIRTLVPADANALAKQGFIDSVSPEVSASDNIRFLGKSAIASINGVGREHFRVKGIELLQGTTFRDDRNALQEVIIDENTRKAIFDNTGLQALGQIVFLGSVPARVVGIAKSNNRSDASNRITVWMPYSTVMYRIVGKPVLTGISVRLKDNVDNEAAISAISQLLTRRHGIKDFQLYNFEQIRKSIEHTSMTFSILILMVACISLMIGSIGVMNIMLISVTERTHEIGVRMAVGARRSDIMQQFIIEAVLVCLIGGALGIALSYITGALFNALADGIFAAIYSWQAAVAAFFCSTLIGIIFGYLPARKAARMDPVISLASE.

The 239-residue stretch at 5-243 (IELKGVSRTY…TLPKTNRIRQ (239 aa)) folds into the ABC transporter domain. 41–48 (GASGSGKS) is a binding site for ATP. A run of 4 helical transmembrane segments spans residues 272–292 (TLTM…VALG), 518–538 (FSIL…IGVM), 570–590 (IIEA…LSYI), and 611–631 (AAVA…YLPA).

It belongs to the ABC transporter superfamily. Macrolide exporter (TC 3.A.1.122) family. Homodimer. Part of the tripartite efflux system MacAB-TolC, which is composed of an inner membrane transporter, MacB, a periplasmic membrane fusion protein, MacA, and an outer membrane component, TolC. The complex forms a large protein conduit and can translocate molecules across both the inner and outer membranes. Interacts with MacA.

Its subcellular location is the cell inner membrane. Functionally, part of the tripartite efflux system MacAB-TolC. MacB is a non-canonical ABC transporter that contains transmembrane domains (TMD), which form a pore in the inner membrane, and an ATP-binding domain (NBD), which is responsible for energy generation. Confers resistance against macrolides. This is Macrolide export ATP-binding/permease protein MacB from Escherichia coli.